A 622-amino-acid chain; its full sequence is Low affinity potassium transport system protein Kup (622 aa).

Transmembrane regions (helical) follow at residues L9–L29, V49–L69, V103–I123, P137–I157, V165–L185, V213–A233, W247–L267, P276–A296, I337–F357, L363–T383, F396–L416, and L419–T439.

The protein belongs to the HAK/KUP transporter (TC 2.A.72) family.

It is found in the cell inner membrane. It catalyses the reaction K(+)(in) + H(+)(in) = K(+)(out) + H(+)(out). Functionally, responsible for the low-affinity transport of potassium into the cell. Likely operates as a K(+):H(+) symporter. This is Low affinity potassium transport system protein Kup from Shigella sonnei (strain Ss046).